The sequence spans 784 residues: N-alpha-acetyltransferase 35, NatC auxiliary subunit homolog (784 aa).

Disordered stretches follow at residues M1 to P23, N320 to F353, and S606 to T630. Positions K617–T630 are enriched in basic residues.

It belongs to the MAK10 family. In terms of assembly, component of the N-terminal acetyltransferase C (NatC) complex, which is composed of Naa35, Sbat/Naa38 and Naa30A.

It is found in the cytoplasm. Its function is as follows. Auxillary component of the N-terminal acetyltransferase C (NatC) complex which catalyzes acetylation of N-terminal methionine residues. The chain is N-alpha-acetyltransferase 35, NatC auxiliary subunit homolog from Drosophila melanogaster (Fruit fly).